The primary structure comprises 283 residues: Nucleoid occlusion protein (283 aa).

A DNA-binding region (H-T-H motif) is located at residues 148 to 167 (EALAQRLGKGQSTIANKLRL).

This sequence belongs to the ParB family.

It localises to the cytoplasm. Its subcellular location is the nucleoid. Effects nucleoid occlusion by binding relatively nonspecifically to DNA and preventing the assembly of the division machinery in the vicinity of the nucleoid, especially under conditions that disturb the cell cycle. It helps to coordinate cell division and chromosome segregation by preventing the formation of the Z ring through the nucleoid, which would cause chromosome breakage. In Bacillus subtilis (strain 168), this protein is Nucleoid occlusion protein (noc).